Consider the following 414-residue polypeptide: Multifunctional CCA protein (414 aa).

ATP-binding residues include G8 and R11. Residues G8 and R11 each coordinate CTP. 2 residues coordinate Mg(2+): D21 and D23. The ATP site is built by R91, R137, and R140. CTP is bound by residues R91, R137, and R140. Residues 228–329 form the HD domain; that stretch reads TGIHTLLTLA…LKLLDTIDVW (102 aa).

Belongs to the tRNA nucleotidyltransferase/poly(A) polymerase family. Bacterial CCA-adding enzyme type 1 subfamily. In terms of assembly, monomer. Can also form homodimers and oligomers. The cofactor is Mg(2+). Ni(2+) is required as a cofactor.

It carries out the reaction a tRNA precursor + 2 CTP + ATP = a tRNA with a 3' CCA end + 3 diphosphate. The enzyme catalyses a tRNA with a 3' CCA end + 2 CTP + ATP = a tRNA with a 3' CCACCA end + 3 diphosphate. In terms of biological role, catalyzes the addition and repair of the essential 3'-terminal CCA sequence in tRNAs without using a nucleic acid template. Adds these three nucleotides in the order of C, C, and A to the tRNA nucleotide-73, using CTP and ATP as substrates and producing inorganic pyrophosphate. tRNA 3'-terminal CCA addition is required both for tRNA processing and repair. Also involved in tRNA surveillance by mediating tandem CCA addition to generate a CCACCA at the 3' terminus of unstable tRNAs. While stable tRNAs receive only 3'-terminal CCA, unstable tRNAs are marked with CCACCA and rapidly degraded. The sequence is that of Multifunctional CCA protein from Edwardsiella ictaluri (strain 93-146).